Here is a 326-residue protein sequence, read N- to C-terminus: Flap endonuclease 1 (326 aa).

Residues 1–100 (MGNAALRQLA…EEVQERRVAR (100 aa)) are N-domain. Aspartate 28, aspartate 82, glutamate 154, glutamate 156, aspartate 175, aspartate 177, and aspartate 225 together coordinate Mg(2+). An I-domain region spans residues 118 to 246 (AASRLEARTQ…TAISAINDHG (129 aa)). The interaction with PCNA stretch occupies residues 318–326 (VQTGLDEWI).

Belongs to the XPG/RAD2 endonuclease family. FEN1 subfamily. In terms of assembly, interacts with PCNA. PCNA stimulates the nuclease activity without altering cleavage specificity. The cofactor is Mg(2+).

Structure-specific nuclease with 5'-flap endonuclease and 5'-3' exonuclease activities involved in DNA replication and repair. During DNA replication, cleaves the 5'-overhanging flap structure that is generated by displacement synthesis when DNA polymerase encounters the 5'-end of a downstream Okazaki fragment. Binds the unpaired 3'-DNA end and kinks the DNA to facilitate 5' cleavage specificity. Cleaves one nucleotide into the double-stranded DNA from the junction in flap DNA, leaving a nick for ligation. Also involved in the base excision repair (BER) pathway. Acts as a genome stabilization factor that prevents flaps from equilibrating into structures that lead to duplications and deletions. Also possesses 5'-3' exonuclease activity on nicked or gapped double-stranded DNA. The sequence is that of Flap endonuclease 1 from Haloquadratum walsbyi (strain DSM 16790 / HBSQ001).